The following is a 469-amino-acid chain: Glutamate--tRNA ligase (469 aa).

The short motif at 9 to 19 (PSPTGMFHVGG) is the 'HIGH' region element. The Zn(2+) site is built by C100, C102, C122, and D124. The 'KMSKS' region motif lies at 232–236 (KLSKR). Residue K235 participates in ATP binding.

It belongs to the class-I aminoacyl-tRNA synthetase family. Glutamate--tRNA ligase type 1 subfamily. As to quaternary structure, monomer. The cofactor is Zn(2+).

It is found in the cytoplasm. It carries out the reaction tRNA(Glu) + L-glutamate + ATP = L-glutamyl-tRNA(Glu) + AMP + diphosphate. Its function is as follows. Catalyzes the attachment of glutamate to tRNA(Glu) in a two-step reaction: glutamate is first activated by ATP to form Glu-AMP and then transferred to the acceptor end of tRNA(Glu). The chain is Glutamate--tRNA ligase from Salinispora arenicola (strain CNS-205).